The primary structure comprises 310 residues: Glycine--tRNA ligase alpha subunit (310 aa).

This sequence belongs to the class-II aminoacyl-tRNA synthetase family. As to quaternary structure, tetramer of two alpha and two beta subunits.

Its subcellular location is the cytoplasm. The enzyme catalyses tRNA(Gly) + glycine + ATP = glycyl-tRNA(Gly) + AMP + diphosphate. The polypeptide is Glycine--tRNA ligase alpha subunit (Aliivibrio salmonicida (strain LFI1238) (Vibrio salmonicida (strain LFI1238))).